The sequence spans 549 residues: Dihydroxy-acid dehydratase (549 aa).

D78 lines the Mg(2+) pocket. C119 serves as a coordination point for [2Fe-2S] cluster. Mg(2+) contacts are provided by D120 and K121. An N6-carboxylysine modification is found at K121. C192 provides a ligand contact to [2Fe-2S] cluster. E439 is a binding site for Mg(2+). S465 serves as the catalytic Proton acceptor.

This sequence belongs to the IlvD/Edd family. As to quaternary structure, homodimer. It depends on [2Fe-2S] cluster as a cofactor. The cofactor is Mg(2+).

The catalysed reaction is (2R)-2,3-dihydroxy-3-methylbutanoate = 3-methyl-2-oxobutanoate + H2O. It catalyses the reaction (2R,3R)-2,3-dihydroxy-3-methylpentanoate = (S)-3-methyl-2-oxopentanoate + H2O. The protein operates within amino-acid biosynthesis; L-isoleucine biosynthesis; L-isoleucine from 2-oxobutanoate: step 3/4. It participates in amino-acid biosynthesis; L-valine biosynthesis; L-valine from pyruvate: step 3/4. In terms of biological role, functions in the biosynthesis of branched-chain amino acids. Catalyzes the dehydration of (2R,3R)-2,3-dihydroxy-3-methylpentanoate (2,3-dihydroxy-3-methylvalerate) into 2-oxo-3-methylpentanoate (2-oxo-3-methylvalerate) and of (2R)-2,3-dihydroxy-3-methylbutanoate (2,3-dihydroxyisovalerate) into 2-oxo-3-methylbutanoate (2-oxoisovalerate), the penultimate precursor to L-isoleucine and L-valine, respectively. This Endomicrobium trichonymphae protein is Dihydroxy-acid dehydratase.